The primary structure comprises 477 residues: Cyclin-A1-2 (477 aa).

Belongs to the cyclin family. Cyclin AB subfamily.

The polypeptide is Cyclin-A1-2 (CYCA1-2) (Oryza sativa subsp. japonica (Rice)).